The sequence spans 452 residues: Pup--protein ligase (452 aa).

Mg(2+) is bound at residue glutamate 9. ATP is bound at residue arginine 53. Tyrosine 55 lines the Mg(2+) pocket. Aspartate 57 functions as the Proton acceptor in the catalytic mechanism. Glutamate 63 is a binding site for Mg(2+). 2 residues coordinate ATP: threonine 66 and tryptophan 419.

This sequence belongs to the Pup ligase/Pup deamidase family. Pup-conjugating enzyme subfamily.

The catalysed reaction is ATP + [prokaryotic ubiquitin-like protein]-L-glutamate + [protein]-L-lysine = ADP + phosphate + N(6)-([prokaryotic ubiquitin-like protein]-gamma-L-glutamyl)-[protein]-L-lysine.. Its pathway is protein degradation; proteasomal Pup-dependent pathway. It functions in the pathway protein modification; protein pupylation. Functionally, catalyzes the covalent attachment of the prokaryotic ubiquitin-like protein modifier Pup to the proteasomal substrate proteins, thereby targeting them for proteasomal degradation. This tagging system is termed pupylation. The ligation reaction involves the side-chain carboxylate of the C-terminal glutamate of Pup and the side-chain amino group of a substrate lysine. The protein is Pup--protein ligase of Thermobifida fusca (strain YX).